The primary structure comprises 132 residues: Ribosome-binding factor A (132 aa).

The segment at 113–132 is disordered; that stretch reads EANSTRAKDDDEADTPAKDD.

The protein belongs to the RbfA family. Monomer. Binds 30S ribosomal subunits, but not 50S ribosomal subunits or 70S ribosomes.

The protein resides in the cytoplasm. Its function is as follows. One of several proteins that assist in the late maturation steps of the functional core of the 30S ribosomal subunit. Associates with free 30S ribosomal subunits (but not with 30S subunits that are part of 70S ribosomes or polysomes). Required for efficient processing of 16S rRNA. May interact with the 5'-terminal helix region of 16S rRNA. This chain is Ribosome-binding factor A, found in Burkholderia cenocepacia (strain HI2424).